The following is a 1717-amino-acid chain: DNA-directed RNA polymerase I subunit RPA1 (1717 aa).

The Zn(2+) site is built by Cys-64, Cys-67, Cys-74, His-77, Cys-104, and Cys-107. Positions 110 to 201 (LTCPRAAIYL…VAQFWKTHMA (92 aa)) are clamp. Residues Cys-205 and Cys-208 each contribute to the Zn(2+) site. Residues 327 to 433 (FTNGQTVNLQ…IRQILEKKEG (107 aa)) form a clamp region. The segment at 410-423 (DSEMDKLMLEKYPG) is rudder. 3 residues coordinate DNA: Lys-431, Arg-436, and Arg-443. An involved in RRN3 binding to Pol I complex region spans residues 475 to 549 (YPQPVTPWNV…QGTKVVCRHV (75 aa)). Position 559 (Arg-559) interacts with RNA. Residues Asp-595, Asp-597, and Asp-599 each coordinate Mg(2+). Asp-599 contacts RNA. A funnel region spans residues 812 to 890 (KPNADVVRQR…NEINKACMPL (79 aa)). The tract at residues 967–1008 (RPPEFFFHCMAGREGLVDTAVKTSRSGYLQRCIIKHLEGLVI) is bridging helix. Positions 1067-1162 (ADPQKVLGHI…SLSVWRPDIY (96 aa)) are mediates the interaction with TOP2A. Residues 1214–1255 (PGEAVGLLAAQSIGEPSTQMTLNTFHFAGRGEMNVTLGIPRL) form a trigger loop region. Position 1256 (Arg-1256) interacts with DNA. The disordered stretch occupies residues 1372-1493 (RNVNSRRATQ…RRHSRPQGAE (122 aa)). Residues 1380-1397 (TQKDLNDTEDSGRSQREE) show a composition bias toward basic and acidic residues. Ser-1393 is subject to Phosphoserine. 2 stretches are compositionally biased toward acidic residues: residues 1398–1419 (ERDEEEEGNIVDAEAEEGDADA) and 1429–1450 (EEEVDYESEEEGEEEEEEEVQE). Residues 1452–1464 (GNIKGDGVHQGHE) are compositionally biased toward basic and acidic residues. Acidic residues predominate over residues 1465-1477 (PDEEEHLGLEEEE).

This sequence belongs to the RNA polymerase beta' chain family. As to quaternary structure, component of the RNA polymerase I (Pol I) complex consisting of 13 subunits: a ten-subunit catalytic core composed of POLR1A/RPA1, POLR1B/RPA2, POLR1C/RPAC1, POLR1D/RPAC2, POLR1H/RPA12, POLR2E/RPABC1, POLR2F/RPABC2, POLR2H/RPABC3, POLR2K/RPABC4 and POLR2L/RPABC5; a mobile stalk subunit POLR1F/RPA43 protruding from the core and additional subunits homologous to general transcription factors POLR1E/RPA49 and POLR1G/RPA34. Part of Pol I pre-initiation complex (PIC), in which Pol I core assembles with RRN3 and promoter-bound UTBF and SL1/TIF-IB complex. Interacts (via dock II domain) with TOP2A; this interaction may assist Pol I transcription initiation by releasing supercoils occurring during DNA unwinding. Interacts with CAVIN1; this interaction induces the dissociation of Pol I complex paused at rDNA terminator sequences. Interacts with MYO1C. Interacts with ERBB2. Interacts with DDX11. Interacts with RECQL5. Requires Mg(2+) as cofactor. In terms of processing, phosphorylated.

The protein resides in the nucleus. It is found in the nucleolus. Its subcellular location is the chromosome. It catalyses the reaction RNA(n) + a ribonucleoside 5'-triphosphate = RNA(n+1) + diphosphate. Its function is as follows. Catalytic core component of RNA polymerase I (Pol I), a DNA-dependent RNA polymerase which synthesizes ribosomal RNA precursors using the four ribonucleoside triphosphates as substrates. Transcribes 47S pre-rRNAs from multicopy rRNA gene clusters, giving rise to 5.8S, 18S and 28S ribosomal RNAs. Pol I-mediated transcription cycle proceeds through transcription initiation, transcription elongation and transcription termination stages. During transcription initiation, Pol I pre-initiation complex (PIC) is recruited by the selectivity factor 1 (SL1/TIF-IB) complex bound to the core promoter that precedes an rDNA repeat unit. The PIC assembly bends the promoter favoring the formation of the transcription bubble and promoter escape. Once the polymerase has escaped from the promoter it enters the elongation phase during which RNA is actively polymerized, based on complementarity with the template DNA strand. Highly processive, assembles in structures referred to as 'Miller trees' where many elongating Pol I complexes queue and transcribe the same rDNA coding regions. At terminator sequences downstream of the rDNA gene, PTRF interacts with Pol I and halts Pol I transcription leading to the release of the RNA transcript and polymerase from the DNA. Forms Pol I active center together with the second largest subunit POLR1B/RPA2. Appends one nucleotide at a time to the 3' end of the nascent RNA, with POLR1A/RPA1 contributing a Mg(2+)-coordinating DxDGD motif, and POLR1B/RPA2 participating in the coordination of a second Mg(2+) ion and providing lysine residues believed to facilitate Watson-Crick base pairing between the incoming nucleotide and the template base. Typically, Mg(2+) ions direct a 5' nucleoside triphosphate to form a phosphodiester bond with the 3' hydroxyl of the preceding nucleotide of the nascent RNA, with the elimination of pyrophosphate. Has proofreading activity: Pauses and backtracks to allow the cleavage of a missincorporated nucleotide via POLR1H/RPA12. High Pol I processivity is associated with decreased transcription fidelity. This Mus musculus (Mouse) protein is DNA-directed RNA polymerase I subunit RPA1.